Reading from the N-terminus, the 106-residue chain is Phosphoribosyl-ATP pyrophosphatase 1 (106 aa).

It belongs to the PRA-PH family.

The protein resides in the cytoplasm. The catalysed reaction is 1-(5-phospho-beta-D-ribosyl)-ATP + H2O = 1-(5-phospho-beta-D-ribosyl)-5'-AMP + diphosphate + H(+). It participates in amino-acid biosynthesis; L-histidine biosynthesis; L-histidine from 5-phospho-alpha-D-ribose 1-diphosphate: step 2/9. This is Phosphoribosyl-ATP pyrophosphatase 1 (hisE1) from Bradyrhizobium diazoefficiens (strain JCM 10833 / BCRC 13528 / IAM 13628 / NBRC 14792 / USDA 110).